The sequence spans 183 residues: MTKQPEDWLDDVPGDDIEDEDDEIIWVSKSEIKRDAEELKRLGAELVDLGKNALDKIPLDTDLRDAIELAQRIKMEGRRRQLQLIGKMLRQRDVEPIRQALDKLKNRHNQQVVLFHKLEHLRDRLIVEGDDAVAEVLTLWPHADRQQLRSLIRNAKKEKEGNKPPKSARQIFQYLRELAENEG.

This sequence belongs to the DarP family.

It localises to the cytoplasm. Member of a network of 50S ribosomal subunit biogenesis factors which assembles along the 30S-50S interface, preventing incorrect 23S rRNA structures from forming. Promotes peptidyl transferase center (PTC) maturation. This is Dual-action ribosomal maturation protein DarP from Salmonella paratyphi A (strain ATCC 9150 / SARB42).